We begin with the raw amino-acid sequence, 208 residues long: Protein-L-isoaspartate O-methyltransferase (208 aa).

Residue S59 is part of the active site.

It belongs to the methyltransferase superfamily. L-isoaspartyl/D-aspartyl protein methyltransferase family.

Its subcellular location is the cytoplasm. It carries out the reaction [protein]-L-isoaspartate + S-adenosyl-L-methionine = [protein]-L-isoaspartate alpha-methyl ester + S-adenosyl-L-homocysteine. Functionally, catalyzes the methyl esterification of L-isoaspartyl residues in peptides and proteins that result from spontaneous decomposition of normal L-aspartyl and L-asparaginyl residues. It plays a role in the repair and/or degradation of damaged proteins. This is Protein-L-isoaspartate O-methyltransferase from Pectobacterium carotovorum subsp. carotovorum (strain PC1).